The sequence spans 445 residues: UPF0210 protein llmg_1581 (445 aa).

Belongs to the UPF0210 family. Homodimer.

The sequence is that of UPF0210 protein llmg_1581 from Lactococcus lactis subsp. cremoris (strain MG1363).